The chain runs to 470 residues: ESX-4 secretion system ATPase EccB4 (470 aa).

Residues 44–64 (LALGCVLAIVAAMGCAFVALL) form a helical membrane-spanning segment.

Belongs to the EccB family. In terms of assembly, part of the ESX-4 / type VII secretion system (T7SS), which is composed of cytosolic and membrane components.

The protein localises to the cell membrane. Its function is as follows. An ATPase. In Mycobacterium tuberculosis (strain CDC 1551 / Oshkosh), this protein is ESX-4 secretion system ATPase EccB4 (eccB4).